Consider the following 253-residue polypeptide: MKLPWLSPDTPFPPVEHALSDPAGLLAAGADLSLERLTAAYSNGIFPWYSEGEPILWWSPDPRMVLACADFAPSHSLRKLLRQIAREESALLPRVQVRVDTEFDAVVAQCAAPRDGQAGTWITADMQQAYRAWHAAGVAHSVETWIDGELAGGLYGISLGRMFFGESMFTRVPDASKVALAYLVAFLRRAGVEWIDCQQQTRHLASLGARPVPRARFVEHIRQAIAGPAPAWQSGRLDSQGSLHPAPVSTLLY.

This sequence belongs to the L/F-transferase family.

Its subcellular location is the cytoplasm. It carries out the reaction N-terminal L-lysyl-[protein] + L-leucyl-tRNA(Leu) = N-terminal L-leucyl-L-lysyl-[protein] + tRNA(Leu) + H(+). It catalyses the reaction N-terminal L-arginyl-[protein] + L-leucyl-tRNA(Leu) = N-terminal L-leucyl-L-arginyl-[protein] + tRNA(Leu) + H(+). The enzyme catalyses L-phenylalanyl-tRNA(Phe) + an N-terminal L-alpha-aminoacyl-[protein] = an N-terminal L-phenylalanyl-L-alpha-aminoacyl-[protein] + tRNA(Phe). Its function is as follows. Functions in the N-end rule pathway of protein degradation where it conjugates Leu, Phe and, less efficiently, Met from aminoacyl-tRNAs to the N-termini of proteins containing an N-terminal arginine or lysine. The polypeptide is Leucyl/phenylalanyl-tRNA--protein transferase (Bordetella petrii (strain ATCC BAA-461 / DSM 12804 / CCUG 43448)).